The following is a 911-amino-acid chain: DNA mismatch repair protein MutS (911 aa).

Positions 1 to 95 (MALQGNLFGD…PWSHHSQVTP (95 aa)) are disordered. A compositionally biased stretch (basic and acidic residues) spans 23 to 42 (KRQDEPDQLDDHELTQDAKQ). 727 to 734 (GPNASGKS) contacts ATP.

This sequence belongs to the DNA mismatch repair MutS family.

This protein is involved in the repair of mismatches in DNA. It is possible that it carries out the mismatch recognition step. This protein has a weak ATPase activity. This is DNA mismatch repair protein MutS from Synechococcus sp. (strain CC9311).